A 574-amino-acid chain; its full sequence is Membrane protein insertase YidC (574 aa).

The next 6 membrane-spanning stretches (helical) occupy residues 6 to 26, 350 to 370, 376 to 396, 447 to 467, 491 to 511, and 525 to 545; these read VFLIFAWLMVAALLWMEWGKE, VIDYSRFSIMAIIGQGLFWVL, FLHNWGWAIVGLVVLLRLVLY, GGCLPLLIQMPIFFALYWVLV, FILPALNIAIMWATQKLTPTP, and PLVFGAMMAFVPSGLVLYWVV.

The protein belongs to the OXA1/ALB3/YidC family. Type 1 subfamily. In terms of assembly, interacts with the Sec translocase complex via SecD. Specifically interacts with transmembrane segments of nascent integral membrane proteins during membrane integration.

It is found in the cell inner membrane. Its function is as follows. Required for the insertion and/or proper folding and/or complex formation of integral membrane proteins into the membrane. Involved in integration of membrane proteins that insert both dependently and independently of the Sec translocase complex, as well as at least some lipoproteins. Aids folding of multispanning membrane proteins. The protein is Membrane protein insertase YidC of Xanthomonas oryzae pv. oryzae (strain KACC10331 / KXO85).